The primary structure comprises 150 residues: Endoribonuclease YbeY (150 aa).

Residues H115, H119, and H125 each contribute to the Zn(2+) site.

The protein belongs to the endoribonuclease YbeY family. Zn(2+) is required as a cofactor.

It is found in the cytoplasm. In terms of biological role, single strand-specific metallo-endoribonuclease involved in late-stage 70S ribosome quality control and in maturation of the 3' terminus of the 16S rRNA. This Aquifex aeolicus (strain VF5) protein is Endoribonuclease YbeY.